A 695-amino-acid polypeptide reads, in one-letter code: Elongation factor G (695 aa).

The tr-type G domain maps to 4-279 (EKVRNIGISA…AVTQYLPSPL (276 aa)). GTP-binding positions include 13-20 (AHIDSGKT), 79-83 (DTPGH), and 133-136 (NKMD).

It belongs to the TRAFAC class translation factor GTPase superfamily. Classic translation factor GTPase family. EF-G/EF-2 subfamily.

Its subcellular location is the cytoplasm. Functionally, catalyzes the GTP-dependent ribosomal translocation step during translation elongation. During this step, the ribosome changes from the pre-translocational (PRE) to the post-translocational (POST) state as the newly formed A-site-bound peptidyl-tRNA and P-site-bound deacylated tRNA move to the P and E sites, respectively. Catalyzes the coordinated movement of the two tRNA molecules, the mRNA and conformational changes in the ribosome. The chain is Elongation factor G from Rhodopirellula baltica (strain DSM 10527 / NCIMB 13988 / SH1).